A 238-amino-acid chain; its full sequence is Flagellar L-ring protein (238 aa).

Residues 1–16 (MNKAILAVAMVLLLAG) form the signal peptide. Cys-17 carries N-palmitoyl cysteine lipidation. Cys-17 is lipidated: S-diacylglycerol cysteine.

This sequence belongs to the FlgH family. The basal body constitutes a major portion of the flagellar organelle and consists of four rings (L,P,S, and M) mounted on a central rod.

The protein resides in the cell outer membrane. It is found in the bacterial flagellum basal body. Functionally, assembles around the rod to form the L-ring and probably protects the motor/basal body from shearing forces during rotation. This Brucella abortus (strain 2308) protein is Flagellar L-ring protein.